A 494-amino-acid chain; its full sequence is Glycosyl hydrolase family 109 protein (494 aa).

2 disordered regions span residues 1–35 (MNDA…LRTT) and 59–86 (EAAQ…MAGV). The segment at residues 1 to 55 (MNDAAPQNPGQDEAKGTGEKDNGGSMSPRSALRTTAGVAGAGLGLSALGTGTASA) is a signal peptide (tat-type signal). The span at 12–22 (DEAKGTGEKDN) shows a compositional bias: basic and acidic residues. NAD(+) is bound by residues 103 to 104 (NR), D125, 174 to 177 (WDFH), 194 to 195 (EC), and N223. Substrate contacts are provided by residues Y252, R271, 283–286 (YPNH), and Y365. NAD(+) is bound at residue Y283. The tract at residues 463–494 (KANGKPQQIPDFTRGEWKKSRPGTDSEKPSEP) is disordered. Residues 475 to 494 (TRGEWKKSRPGTDSEKPSEP) show a composition bias toward basic and acidic residues.

It belongs to the Gfo/Idh/MocA family. Glycosyl hydrolase 109 subfamily. NAD(+) serves as cofactor. Predicted to be exported by the Tat system. The position of the signal peptide cleavage has not been experimentally proven.

Its function is as follows. Glycosidase. The polypeptide is Glycosyl hydrolase family 109 protein (Streptomyces niveus (Streptomyces spheroides)).